The primary structure comprises 810 residues: MSFYTAGLIHRARPGYRIIPESTATEDIELGAIGEETPLLSEGAVTAVEESAAVGLPELGAGLAGAIGTHADVLYRNRNVFKSVLTGNYTDLKGNPLKQRNAISEKTKQLGRGIFQGDFNRAFPDDLKLETEQEKKDLLRYYNHNRRLAGLSEAYPQGKGYAYAKSQKVLEAERRGLTVPGYKYLGPGNSLNRGQPTNQIDEDAKEHDEAYDKAKTSQEVSQADNTFVNKALDHIVNAINLKETPGNAFGAAIGAIGIGTKQAIEKHSGVIYPSVSGMSRQINSKYLNSWHDWIEQNKHNNFEGIQLPEDFYTEEQTLSDSPMSEGTKRKADTPVEEGPSKKGAHNAPHNSQGTDPQNPSSSGATTSXDVEMAMSLPGTGSGTSSGGGNTSGQEVYVIPRPFSNFGKKLSTYTKSHKFMIFGLANNVIGPTGTGTTAVNRLITTCLAEIPWQKLPLYMNQSEFDLLPPGSRVVECNVKVIFRTNRIAFETSSTATKQATLNQISNLQTAVGLNKLGWGIDRSFTAFQSDQPMIPTATSAPKYEPITGTTGYRGMIADYYGADSTNDAAFGNAGNYPHHQVGSFTFIQNYYCMYQQTNQGTGGWPCLAEHLQQFDSKTVNNQCLIDVTYKPKMGLIKPPLNYKIIGQPTAKGTISVGDNLVNMRGAVVINPPEATQSVTESTHNLTRNFPANLFNIYSDIEKSQILHKGPWGHENPQIQPSVHIGIQAVPALTTGALLVNSSPLNSWTDSMGYIDVMSSCTVMESQPTHFPFSTDANTNPGNTIYRINLTPNSLTSAFNGLYGNGATLGNV.

2 disordered regions span residues Gln316–Thr366 and Ala373–Gly392. Polar residues predominate over residues Pro348–Thr366. Residues Thr379–Thr390 are compositionally biased toward gly residues.

It localises to the virion. Functionally, capsid protein self-assembles to form an icosahedral capsid with a T=1 symmetry, about 22 nm in diameter, and consisting of 60 copies of size variants of the capsid protein which differ in the N-terminus. The capsid encapsulates the genomic ssDNA. Capsid proteins are responsible for the attachment to host cell receptors. This attachment induces virion internalization predominantly through clathrin-dependent endocytosis. The protein is Capsid protein VP1 (VP) of Junonia coenia densovirus (isolate pBRJ/1990) (JcDNV).